Consider the following 226-residue polypeptide: DNA mismatch repair protein MutH (226 aa).

This sequence belongs to the MutH family.

It is found in the cytoplasm. Its function is as follows. Sequence-specific endonuclease that cleaves unmethylated GATC sequences. It is involved in DNA mismatch repair. The protein is DNA mismatch repair protein MutH of Actinobacillus pleuropneumoniae serotype 5b (strain L20).